The primary structure comprises 122 residues: Large ribosomal subunit protein uL14 (122 aa).

This sequence belongs to the universal ribosomal protein uL14 family. Part of the 50S ribosomal subunit. Forms a cluster with proteins L3 and L19. In the 70S ribosome, L14 and L19 interact and together make contacts with the 16S rRNA in bridges B5 and B8.

Functionally, binds to 23S rRNA. Forms part of two intersubunit bridges in the 70S ribosome. The polypeptide is Large ribosomal subunit protein uL14 (Acetivibrio thermocellus (strain ATCC 27405 / DSM 1237 / JCM 9322 / NBRC 103400 / NCIMB 10682 / NRRL B-4536 / VPI 7372) (Clostridium thermocellum)).